We begin with the raw amino-acid sequence, 167 residues long: ATP synthase subunit delta, mitochondrial (167 aa).

A mitochondrion-targeting transit peptide spans 1–28; the sequence is MFRLSNYMLRKSQFPQGLVRAPFGIRGY.

The protein belongs to the ATPase epsilon chain family. F-type ATPases have 2 components, CF(1) - the catalytic core - and CF(0) - the membrane proton channel. CF(1) has five subunits: alpha(3), beta(3), gamma(1), delta(1), epsilon(1). CF(0) has three main subunits: a, b and c.

The protein localises to the mitochondrion. It localises to the mitochondrion inner membrane. Its function is as follows. Mitochondrial membrane ATP synthase (F(1)F(0) ATP synthase or Complex V) produces ATP from ADP in the presence of a proton gradient across the membrane which is generated by electron transport complexes of the respiratory chain. F-type ATPases consist of two structural domains, F(1) - containing the extramembraneous catalytic core, and F(0) - containing the membrane proton channel, linked together by a central stalk and a peripheral stalk. During catalysis, ATP turnover in the catalytic domain of F(1) is coupled via a rotary mechanism of the central stalk subunits to proton translocation. Part of the complex F(1) domain and of the central stalk which is part of the complex rotary element. Rotation of the central stalk against the surrounding alpha(3)beta(3) subunits leads to hydrolysis of ATP in three separate catalytic sites on the beta subunits. The polypeptide is ATP synthase subunit delta, mitochondrial (atp16) (Schizosaccharomyces pombe (strain 972 / ATCC 24843) (Fission yeast)).